The sequence spans 254 residues: (2Z,6E)-farnesyl diphosphate synthase (254 aa).

Residue Asp-34 is part of the active site. Asp-34 is a binding site for Mg(2+). Residues Gly-35 to Arg-38, Trp-39, His-52, and Ser-80 to Asp-82 contribute to the substrate site. Asn-83 functions as the Proton acceptor in the catalytic mechanism. Substrate-binding positions include Arg-86, Arg-203, and Arg-209–Ser-211. Glu-222 contacts Mg(2+).

Belongs to the UPP synthase family. Z-FPP synthase subfamily. In terms of assembly, homodimer. The cofactor is Mg(2+).

The catalysed reaction is isopentenyl diphosphate + (2E)-geranyl diphosphate = (2Z,6E)-farnesyl diphosphate + diphosphate. Its function is as follows. Catalyzes the condensation of only one isopentenyl pyrophosphate (IPP) unit in the cis configuration to E-geranyl diphosphate (E-GPP) generating the 15 carbon product (2Z,6E)-farnesyl diphosphate (Z-FPP or EZ-FPP). Only geranyl diphosphate (GPP) can be used as isoprenyl acceptor. This chain is (2Z,6E)-farnesyl diphosphate synthase, found in Thermobifida fusca (strain YX).